We begin with the raw amino-acid sequence, 416 residues long: Prostacyclin receptor (416 aa).

Over 1–45 (MVASGGRPDGPPSITPESPLIVGGREWQGMAGSCWNITYVQDSVG) the chain is Extracellular. 2 cysteine pairs are disulfide-bonded: Cys34–Cys194 and Cys121–Cys199. N-linked (GlcNAc...) asparagine glycosylation is present at Asn36. Residues 46 to 67 (PATSTLMFVAGVVGNGLALGIL) form a helical membrane-spanning segment. Residues 68–80 (GARRRSHPSAFAV) are Cytoplasmic-facing. Residues 81–105 (LVTGLAVTDLLGTCFLSPAVFVAYA) form a helical membrane-spanning segment. Topologically, residues 106–123 (RNSSLLGLAHGGTMLCDT) are extracellular. The helical transmembrane segment at 124-144 (FAFAMTFFGLASTLILFAMAV) threads the bilayer. Over 145-163 (ERCLALSHPYLYAQLDGPR) the chain is Cytoplasmic. A helical transmembrane segment spans residues 164-187 (CARLALPAIYAFCCLFCSLPLLGL). Residues 188–215 (GEHQQYCPGSWCFIRMRSPQPGGCAFSL) are Extracellular-facing. A helical membrane pass occupies residues 216-237 (AYASLMALLVTSIFFCNGSVTL). Residues 238–264 (SLCHMYRQQRRHHGSFVPTSRAREDEV) are Cytoplasmic-facing. A helical membrane pass occupies residues 265–289 (YHLILLALMTGIMAVCSLPLTIRGF). Over 290-302 (TQAIAPDSREMGD) the chain is Extracellular. Residues 303-323 (LHAFRFNAFNPILDPWVFILF) form a helical membrane-spanning segment. The Cytoplasmic segment spans residues 324–416 (RKAVFQRLKF…TEAVVACSLC (93 aa)). Ser366 carries the post-translational modification Phosphoserine. Position 413 is a cysteine methyl ester (Cys413). A lipid anchor (S-farnesyl cysteine) is attached at Cys413. The propeptide at 414 to 416 (SLC) is removed in mature form.

This sequence belongs to the G-protein coupled receptor 1 family. Interacts (non-isoprenylated C-terminus) with PDZK1. Post-translationally, isoprenylation does not influence ligand binding but is required for efficient coupling to the effectors adenylyl cyclase and phospholipase C.

The protein localises to the cell membrane. Functionally, receptor for prostacyclin (prostaglandin I2 or PGI2). The activity of this receptor is mediated by G(s) proteins which activate adenylate cyclase. The sequence is that of Prostacyclin receptor (Ptgir) from Rattus norvegicus (Rat).